A 311-amino-acid chain; its full sequence is Pyrimidine-specific ribonucleoside hydrolase RihA (311 aa).

Residue H240 is part of the active site.

The protein belongs to the IUNH family. RihA subfamily.

In terms of biological role, hydrolyzes with equal efficiency cytidine or uridine to ribose and cytosine or uracil, respectively. The polypeptide is Pyrimidine-specific ribonucleoside hydrolase RihA (Escherichia coli (strain SMS-3-5 / SECEC)).